Reading from the N-terminus, the 137-residue chain is MAQKPLSTAAAERMNLVGQDEIWKYRLKAESEARQNWPQNWGFLTTPFEELIKCEEDLPTPKPKIELPERFRIRPVTPVEKYIKVFPSPPVPQTTQGFIGWRSAVPGLNKCLELDDAIRSCKGAFARELCWPKQGVH.

As to expression, expressed in airway epithelial cells, renal tubular cells, pancreatic acinar cells and epithelial cells of the stomach, duodenum, and gallbladder (at protein level).

The protein resides in the cell projection. It localises to the cilium. The polypeptide is Ciliary microtubule inner protein 1 (Homo sapiens (Human)).